Here is a 299-residue protein sequence, read N- to C-terminus: Virginiamycin B lyase (299 aa).

His-228 is a substrate binding site. Glu-268 is a Mg(2+) binding site. The active-site Proton acceptor is His-270. Glu-284 lines the Mg(2+) pocket.

Belongs to the Vgb family. Monomer. Requires Mg(2+) as cofactor.

Its function is as follows. Inactivates the type B streptogramin antibiotics by linearizing the lactone ring at the ester linkage, generating a free phenylglycine carboxylate and converting the threonyl moiety into 2-amino-butenoic acid. This is Virginiamycin B lyase (vgb) from Staphylococcus aureus.